Reading from the N-terminus, the 762-residue chain is Phosphoribosylformylglycinamidine synthase subunit PurL (762 aa).

The active site involves histidine 58. The ATP site is built by tyrosine 61 and arginine 105. Residue glutamate 107 coordinates Mg(2+). Residues 108-111 (SHNH) and arginine 130 contribute to the substrate site. The active-site Proton acceptor is the histidine 109. Aspartate 131 is a Mg(2+) binding site. Residue glutamine 255 participates in substrate binding. Aspartate 283 lines the Mg(2+) pocket. 327–329 (ESQ) is a substrate binding site. Positions 513 and 550 each coordinate ATP. Asparagine 551 serves as a coordination point for Mg(2+). Substrate is bound at residue serine 553.

Belongs to the FGAMS family. In terms of assembly, monomer. Part of the FGAM synthase complex composed of 1 PurL, 1 PurQ and 2 PurS subunits.

It is found in the cytoplasm. The catalysed reaction is N(2)-formyl-N(1)-(5-phospho-beta-D-ribosyl)glycinamide + L-glutamine + ATP + H2O = 2-formamido-N(1)-(5-O-phospho-beta-D-ribosyl)acetamidine + L-glutamate + ADP + phosphate + H(+). Its pathway is purine metabolism; IMP biosynthesis via de novo pathway; 5-amino-1-(5-phospho-D-ribosyl)imidazole from N(2)-formyl-N(1)-(5-phospho-D-ribosyl)glycinamide: step 1/2. Functionally, part of the phosphoribosylformylglycinamidine synthase complex involved in the purines biosynthetic pathway. Catalyzes the ATP-dependent conversion of formylglycinamide ribonucleotide (FGAR) and glutamine to yield formylglycinamidine ribonucleotide (FGAM) and glutamate. The FGAM synthase complex is composed of three subunits. PurQ produces an ammonia molecule by converting glutamine to glutamate. PurL transfers the ammonia molecule to FGAR to form FGAM in an ATP-dependent manner. PurS interacts with PurQ and PurL and is thought to assist in the transfer of the ammonia molecule from PurQ to PurL. This Corynebacterium glutamicum (strain ATCC 13032 / DSM 20300 / JCM 1318 / BCRC 11384 / CCUG 27702 / LMG 3730 / NBRC 12168 / NCIMB 10025 / NRRL B-2784 / 534) protein is Phosphoribosylformylglycinamidine synthase subunit PurL.